Reading from the N-terminus, the 139-residue chain is D-ribose pyranase (139 aa).

His20 serves as the catalytic Proton donor. Residues Asp28, His106, and 128–130 (YAN) contribute to the substrate site.

The protein belongs to the RbsD / FucU family. RbsD subfamily. In terms of assembly, homodecamer.

It is found in the cytoplasm. It catalyses the reaction beta-D-ribopyranose = beta-D-ribofuranose. It functions in the pathway carbohydrate metabolism; D-ribose degradation; D-ribose 5-phosphate from beta-D-ribopyranose: step 1/2. Catalyzes the interconversion of beta-pyran and beta-furan forms of D-ribose. This is D-ribose pyranase from Escherichia coli O6:H1 (strain CFT073 / ATCC 700928 / UPEC).